The sequence spans 417 residues: Serine hydroxymethyltransferase (417 aa).

Residues Leu-121 and Gly-125–Leu-127 each bind (6S)-5,6,7,8-tetrahydrofolate. Lys-229 carries the post-translational modification N6-(pyridoxal phosphate)lysine. Position 355–357 (Ser-355–Phe-357) interacts with (6S)-5,6,7,8-tetrahydrofolate.

This sequence belongs to the SHMT family. In terms of assembly, homodimer. It depends on pyridoxal 5'-phosphate as a cofactor.

It is found in the cytoplasm. The enzyme catalyses (6R)-5,10-methylene-5,6,7,8-tetrahydrofolate + glycine + H2O = (6S)-5,6,7,8-tetrahydrofolate + L-serine. The protein operates within one-carbon metabolism; tetrahydrofolate interconversion. Its pathway is amino-acid biosynthesis; glycine biosynthesis; glycine from L-serine: step 1/1. Functionally, catalyzes the reversible interconversion of serine and glycine with tetrahydrofolate (THF) serving as the one-carbon carrier. This reaction serves as the major source of one-carbon groups required for the biosynthesis of purines, thymidylate, methionine, and other important biomolecules. Also exhibits THF-independent aldolase activity toward beta-hydroxyamino acids, producing glycine and aldehydes, via a retro-aldol mechanism. The polypeptide is Serine hydroxymethyltransferase (Shewanella oneidensis (strain ATCC 700550 / JCM 31522 / CIP 106686 / LMG 19005 / NCIMB 14063 / MR-1)).